Consider the following 152-residue polypeptide: MKTFFLKEKQVDKKWLVIDAEGLVVGRLAAFVAALLRGKHKPEYTPHMDCGDNVIIVNAEKVHFTGKKLKDKIYYRHTGYSGGLKKTTPDNILNGKFPERVIKMAVKRMLDDGPMARRRFENLYVYSGSEHKHQGQQPEKIDFASLNRKNKK.

This sequence belongs to the universal ribosomal protein uL13 family. Part of the 50S ribosomal subunit.

Its function is as follows. This protein is one of the early assembly proteins of the 50S ribosomal subunit, although it is not seen to bind rRNA by itself. It is important during the early stages of 50S assembly. The protein is Large ribosomal subunit protein uL13 of Wolbachia pipientis subsp. Culex pipiens (strain wPip).